We begin with the raw amino-acid sequence, 200 residues long: NADH-quinone oxidoreductase subunit C (200 aa).

Belongs to the complex I 30 kDa subunit family. In terms of assembly, NDH-1 is composed of 14 different subunits. Subunits NuoB, C, D, E, F, and G constitute the peripheral sector of the complex.

It is found in the cell inner membrane. The enzyme catalyses a quinone + NADH + 5 H(+)(in) = a quinol + NAD(+) + 4 H(+)(out). Its function is as follows. NDH-1 shuttles electrons from NADH, via FMN and iron-sulfur (Fe-S) centers, to quinones in the respiratory chain. The immediate electron acceptor for the enzyme in this species is believed to be ubiquinone. Couples the redox reaction to proton translocation (for every two electrons transferred, four hydrogen ions are translocated across the cytoplasmic membrane), and thus conserves the redox energy in a proton gradient. The protein is NADH-quinone oxidoreductase subunit C of Rhizobium rhizogenes (strain K84 / ATCC BAA-868) (Agrobacterium radiobacter).